Here is a 78-residue protein sequence, read N- to C-terminus: U-scoloptoxin(04)-Er1a (78 aa).

The signal sequence occupies residues 1–24; the sequence is MTRHLIFAAVLLVCLFVCWNAIGA. Positions 25–28 are excised as a propeptide; it reads QDAR.

The protein belongs to the scoloptoxin-04 family. In terms of processing, contains 2 disulfide bonds. Expressed by the venom gland.

It localises to the secreted. This is U-scoloptoxin(04)-Er1a from Ethmostigmus rubripes (Giant centipede).